We begin with the raw amino-acid sequence, 513 residues long: Activin receptor type-2B (513 aa).

An N-terminal signal peptide occupies residues 1-18; the sequence is MTAPWAALALLWGSLCAG. Residues 19–137 lie on the Extracellular side of the membrane; it reads SGRGEAETRE…PPPTAPTLLT (119 aa). 5 disulfide bridges follow: C29-C59, C49-C77, C84-C103, C90-C102, and C104-C109. N42 and N65 each carry an N-linked (GlcNAc...) asparagine glycan. Residues 138 to 158 traverse the membrane as a helical segment; sequence VLAYSLLPIGGLSLIVLLAFW. At 159 to 513 the chain is on the cytoplasmic side; the sequence is MYRHRKPPYG…VDLLPKESSI (355 aa). A Protein kinase domain is found at 190 to 481; sequence LQLLEIKARG…AGCVEERVSL (292 aa). Residues 196–204 and K217 contribute to the ATP site; that span reads KARGRFGCV. Catalysis depends on D322, which acts as the Proton acceptor. Residues 492–513 are interaction with DYNLT1; that stretch reads DCLVSLVTSVTNVDLLPKESSI.

The protein belongs to the protein kinase superfamily. TKL Ser/Thr protein kinase family. TGFB receptor subfamily. As to quaternary structure, forms an activin receptor complex with activin type II receptors such as ACVR1B. Interacts with VPS39. Interacts with DYNLT1. Interacts with BMP3. Interacts with BMP2. Requires Mg(2+) as cofactor. Mn(2+) serves as cofactor. Phosphorylated. Constitutive phosphorylation is in part catalyzed by its own kinase activity.

It is found in the cell membrane. It carries out the reaction L-threonyl-[receptor-protein] + ATP = O-phospho-L-threonyl-[receptor-protein] + ADP + H(+). The catalysed reaction is L-seryl-[receptor-protein] + ATP = O-phospho-L-seryl-[receptor-protein] + ADP + H(+). Its function is as follows. Transmembrane serine/threonine kinase activin type-2 receptor forming an activin receptor complex with activin type-1 serine/threonine kinase receptors (ACVR1, ACVR1B or ACVR1c). Transduces the activin signal from the cell surface to the cytoplasm and is thus regulating many physiological and pathological processes including neuronal differentiation and neuronal survival, hair follicle development and cycling, FSH production by the pituitary gland, wound healing, extracellular matrix production, immunosuppression and carcinogenesis. Activin is also thought to have a paracrine or autocrine role in follicular development in the ovary. Within the receptor complex, the type-2 receptors act as a primary activin receptors (binds activin-A/INHBA, activin-B/INHBB as well as inhibin-A/INHA-INHBA). The type-1 receptors like ACVR1B act as downstream transducers of activin signals. Activin binds to type-2 receptor at the plasma membrane and activates its serine-threonine kinase. The activated receptor type-2 then phosphorylates and activates the type-1 receptor. Once activated, the type-1 receptor binds and phosphorylates the SMAD proteins SMAD2 and SMAD3, on serine residues of the C-terminal tail. Soon after their association with the activin receptor and subsequent phosphorylation, SMAD2 and SMAD3 are released into the cytoplasm where they interact with the common partner SMAD4. This SMAD complex translocates into the nucleus where it mediates activin-induced transcription. Inhibitory SMAD7, which is recruited to ACVR1B through FKBP1A, can prevent the association of SMAD2 and SMAD3 with the activin receptor complex, thereby blocking the activin signal. Activin signal transduction is also antagonized by the binding to the receptor of inhibin-B via the IGSF1 inhibin coreceptor. The protein is Activin receptor type-2B (Acvr2b) of Rattus norvegicus (Rat).